Here is a 242-residue protein sequence, read N- to C-terminus: Zinc-finger homeodomain protein 11 (242 aa).

A ZF-HD dimerization-type; degenerate zinc finger spans residues 31-82; it reads YKECLKNHAANLGGHALDGCGEFMPSPTATSTDPSSLRCAACGCHRNFHRRD. 2 disordered regions span residues 83-109 and 135-161; these read PSEN…SRHV and PGPS…RTRT. Positions 156 to 213 form a DNA-binding region, homeobox; atypical; that stretch reads RKRTRTKFTPEQKIKMRAFAEKAGWKINGCDEKSVREFCNEVGIERGVLKVWMHNNKY.

As to quaternary structure, homo- and heterodimer with other ZFHD proteins. Interacts with HIPP20, HIPP21, HIPP22, HIPP23, HIPP24, HIPP26, HIPP27, HIPP30 and MED25 (via ACID domain). Interacts with NAC019, NAC055 and NAC072 (via NAC binding domain). Binds to ZHD1, ZHD2, ZHD3, ZHD4, ZHD5, ZHD6, ZHD7, ZHD8, ZHD9, ZHD12, ZHD13 and ZHD14. In terms of tissue distribution, expressed in roots, inflorescences, open flowers and seeds. Detected in stems and seedlings.

It is found in the nucleus. Functionally, transcription factor involved in the up-regulation of several stress-inducible genes. Acts as a transcriptional activator by interacting with MED25 and NAC proteins. Involved in increased drought tolerance. The chain is Zinc-finger homeodomain protein 11 (ZHD11) from Arabidopsis thaliana (Mouse-ear cress).